The sequence spans 374 residues: Alcohol dehydrogenase 1 (374 aa).

The residue at position 1 (S1) is an N-acetylserine. 7 residues coordinate Zn(2+): C46, H67, C97, C100, C103, C111, and C174. NAD(+) is bound by residues 199 to 204 (GLGGVG), D223, K228, 292 to 294 (VGV), and R369.

The protein belongs to the zinc-containing alcohol dehydrogenase family. Class-I subfamily. In terms of assembly, homodimer. It depends on Zn(2+) as a cofactor.

The protein resides in the cytoplasm. The catalysed reaction is a primary alcohol + NAD(+) = an aldehyde + NADH + H(+). It carries out the reaction a secondary alcohol + NAD(+) = a ketone + NADH + H(+). In Struthio camelus (Common ostrich), this protein is Alcohol dehydrogenase 1 (ADH1).